The following is a 193-amino-acid chain: Putative 3-methyladenine DNA glycosylase (193 aa).

The protein belongs to the DNA glycosylase MPG family.

The sequence is that of Putative 3-methyladenine DNA glycosylase from Francisella tularensis subsp. holarctica (strain FTNF002-00 / FTA).